The following is a 365-amino-acid chain: N5-carboxyaminoimidazole ribonucleotide synthase (365 aa).

Residues R93, K132, 137-143 (GYDGKGQ), 168-171 (EEFV), E176, H199, and 249-250 (NE) each bind ATP. Residues 97 to 279 (KLFLKKHGFP…QFENLLRAIT (183 aa)) enclose the ATP-grasp domain.

This sequence belongs to the PurK/PurT family. Homodimer.

It catalyses the reaction 5-amino-1-(5-phospho-beta-D-ribosyl)imidazole + hydrogencarbonate + ATP = 5-carboxyamino-1-(5-phospho-D-ribosyl)imidazole + ADP + phosphate + 2 H(+). The protein operates within purine metabolism; IMP biosynthesis via de novo pathway; 5-amino-1-(5-phospho-D-ribosyl)imidazole-4-carboxylate from 5-amino-1-(5-phospho-D-ribosyl)imidazole (N5-CAIR route): step 1/2. Catalyzes the ATP-dependent conversion of 5-aminoimidazole ribonucleotide (AIR) and HCO(3)(-) to N5-carboxyaminoimidazole ribonucleotide (N5-CAIR). This is N5-carboxyaminoimidazole ribonucleotide synthase from Aquifex aeolicus (strain VF5).